Here is a 223-residue protein sequence, read N- to C-terminus: SCMKAAPMKEVSIRGQGSLAYPGLRTQGNLETLSGPNDATRGLTSLADTFEHVIEELLDEQQAIQPSKENKDADLYSTRVMLSSQVPLEPPLLFLLEEYKNYLDAANMSMRVRRHSDPARRGELSVCDSTSEWVTAAEKKTAVDMSGATVTVLEKVPVPKGQLKQYFYETKCSSKGYAKEGCRGIDKRYWNSQCRTTQSFVRALTMDNKKRVGWRFIRIDTSC.

A signal peptide spans serine 1–alanine 5. The propeptide occupies alanine 6–arginine 114. Asparagine 107 is a glycosylation site (N-linked (GlcNAc...) asparagine). 2 disulfide bridges follow: cysteine 127/cysteine 194 and cysteine 172/cysteine 223.

It belongs to the NGF-beta family.

It is found in the secreted. In terms of biological role, promotes the survival of neuronal populations that are all located either in the central nervous system or directly connected to it. This chain is Neurotrophic factor BDNF precursor form (BDNF), found in Eryx johnii (Indian red sand boa).